Consider the following 188-residue polypeptide: Ion-translocating oxidoreductase complex subunit G (188 aa).

Residues 1-9 (MSDSKEITK) are Cytoplasmic-facing. A helical membrane pass occupies residues 10-30 (VIVTMVVISAVAAALLALTYT). The Extracellular portion of the chain corresponds to 31–188 (PTQAQLKLLQ…AVDYVSAQEG (158 aa)). At Thr-166 the chain carries FMN phosphoryl threonine.

The protein belongs to the RnfG family. As to quaternary structure, the Rnf complex is probably composed of eight subunits, including RnfA, RnfB, RnfC, RnfD, RnfE and RnfG. Requires FMN as cofactor.

It is found in the cell membrane. Part of a membrane-bound complex that couples electron transfer with translocation of ions across the membrane. Catalyzes Na(+) transport, most probably coupled to electron transfer from reduced ferredoxin to methanophenazine and heterodisulfide reductase. Involved in heterodisulfide reduction during methanogenesis from acetate. This chain is Ion-translocating oxidoreductase complex subunit G, found in Methanosarcina acetivorans (strain ATCC 35395 / DSM 2834 / JCM 12185 / C2A).